Reading from the N-terminus, the 50-residue chain is Major pollen allergen Ole e 6 (50 aa).

Intrachain disulfides connect Cys8–Cys34, Cys12–Cys30, and Cys16–Cys26.

As to expression, expressed in pollen.

The polypeptide is Major pollen allergen Ole e 6 (OLE6) (Olea europaea (Common olive)).